The chain runs to 763 residues: ATP-dependent Clp protease ATP-binding subunit ClpL (763 aa).

The segment at 136–386 (IEKLGTNLTE…FSGKNSQTDV (251 aa)) is i. Residues 181–188 (GESGVGKT) and 511–518 (GPTGVGKT) contribute to the ATP site. An II region spans residues 437 to 629 (ATIDDVAQSV…IIIMTSNAGF (193 aa)).

This sequence belongs to the ClpA/ClpB family.

Could be the ATP-dependent specificity component of an ATP-dependent protease. This chain is ATP-dependent Clp protease ATP-binding subunit ClpL (clpL), found in Lactococcus lactis subsp. lactis (Streptococcus lactis).